The primary structure comprises 562 residues: Urocanate hydratase (562 aa).

NAD(+) contacts are provided by residues 52–53, Q130, 176–178, E196, R201, 242–243, 263–267, 273–274, and Y322; these read GG, GMG, NA, QTSAH, and YL. Residue C410 is part of the active site. G492 contributes to the NAD(+) binding site.

Belongs to the urocanase family. NAD(+) is required as a cofactor.

Its subcellular location is the cytoplasm. The catalysed reaction is 4-imidazolone-5-propanoate = trans-urocanate + H2O. It participates in amino-acid degradation; L-histidine degradation into L-glutamate; N-formimidoyl-L-glutamate from L-histidine: step 2/3. Functionally, catalyzes the conversion of urocanate to 4-imidazolone-5-propionate. The chain is Urocanate hydratase from Shewanella pealeana (strain ATCC 700345 / ANG-SQ1).